Reading from the N-terminus, the 1233-residue chain is uncharacterized protein (1233 aa).

3 disordered regions span residues 32–51 (SETSSTQPPPPEQGQETPKP), 510–529 (ATTNEEEPSQEVEESEPVPD), and 882–915 (EVIEEELIKDENEEEEDEDEEDEGDNKQRVIERS). Acidic residues-rich tracts occupy residues 513 to 529 (NEEEPSQEVEESEPVPD) and 882 to 905 (EVIEEELIKDENEEEEDEDEEDEG). Basic and acidic residues predominate over residues 906-915 (DNKQRVIERS).

This is an uncharacterized protein from Dictyostelium discoideum (Social amoeba).